Here is a 321-residue protein sequence, read N- to C-terminus: Ferredoxin--NADP reductase (321 aa).

Residues Asp28, Gln36, Tyr41, Ala81, Phe115, Asp274, and Ser315 each coordinate FAD.

It belongs to the ferredoxin--NADP reductase type 2 family. Homodimer. Requires FAD as cofactor.

It catalyses the reaction 2 reduced [2Fe-2S]-[ferredoxin] + NADP(+) + H(+) = 2 oxidized [2Fe-2S]-[ferredoxin] + NADPH. The sequence is that of Ferredoxin--NADP reductase from Frankia alni (strain DSM 45986 / CECT 9034 / ACN14a).